We begin with the raw amino-acid sequence, 132 residues long: Interleukin-4 (132 aa).

Residues 1–24 form the signal peptide; it reads MGLTSQLIPTLVCLLALTSTFVHG. Residues asparagine 28, asparagine 45, asparagine 62, asparagine 83, asparagine 95, and asparagine 101 are each glycosylated (N-linked (GlcNAc...) asparagine). Cystine bridges form between cysteine 48-cysteine 84 and cysteine 70-cysteine 104.

The protein belongs to the IL-4/IL-13 family.

The protein resides in the secreted. Functionally, participates in at least several B-cell activation processes as well as of other cell types. It is a costimulator of DNA-synthesis. It induces the expression of class II MHC molecules on resting B-cells. It enhances both secretion and cell surface expression of IgE and IgG1. It also regulates the expression of the low affinity Fc receptor for IgE (CD23) on both lymphocytes and monocytes. Positively regulates IL31RA expression in macrophages. Stimulates autophagy in dendritic cells by interfering with mTORC1 signaling and through the induction of RUFY4. The sequence is that of Interleukin-4 (IL4) from Canis lupus familiaris (Dog).